Consider the following 637-residue polypeptide: MPEISPAELAKVSSSSSSSSSSSSGRASVKIEEIEGGAAASGVVIVSEELETNPKTVVASIADETVAESSGTGNKSFSRVWTMPLEGSSSSDKAESSSTNQPRLDKSKTERQQKVTHILAEDAAKIFDDKISAGKKLKLLNRIATVKHDGTVEFEVPADAIPQPIVVDRGESKNGVCADESIDGVDLQYIPPMQIVMLIVGTRGDVQPFVAIAKRLQDYGHRVRLATHANFKEFVLTAGLEFYPLGGDPKVLAGYMVKNKGFLPSGPSEIPIQRNQMKDIIYSLLPACKEPDPDSGISFKADAIIANPPAYGHTHVAEALKIPIHVFFTMPWTPTSEFPHPLSRVKQPAGYRLSYQIVDSLIWLGIRDMVNDLRKKKLKLRPVTYLSGTQGSGSNIPHGYMWSPHLVPKPKDWGPQIDVVGFCYLDLASNYEPPAELVEWLEAGDKPIYIGFGSLPVQEPEKMTEIIVEALQRTKQRGIINKGWGGLGNLKEPKDFVYLLDNVPHDWLFPRCKAVVHHGGAGTTAAGLKASCPTTIVPFFGDQPFWGERVHARGVGPSPIPVDEFSLHKLEDAINFMLDDKVKSSAETLAKAMKDEDGVAGAVKAFFKHLPSAKQNISDPIPEPSGFLSFRKCFGCS.

2 disordered regions span residues 1 to 29 and 66 to 112; these read MPEI…RASV and VAES…TERQ. Positions 13-24 are enriched in low complexity; that stretch reads SSSSSSSSSSSS. A compositionally biased stretch (polar residues) spans 67 to 79; that stretch reads AESSGTGNKSFSR. Over residues 103–112 the composition is skewed to basic and acidic residues; that stretch reads RLDKSKTERQ.

The protein belongs to the glycosyltransferase 28 family. In terms of tissue distribution, expressed in roots, cauline leaf epidermal cells, stomata, stamen, pollen and around the base of siliques.

The enzyme catalyses a sterol + UDP-alpha-D-glucose = a sterol 3-beta-D-glucoside + UDP + H(+). In terms of biological role, involved in the biosynthesis of sterol glucosides. Catalyzes the synthesis of steryl glycosides (SGs) and acyl steryl glycosides (ASGs) which are the most abundant sterol derivatives in higher plants. Can act on several sterols like sitosterol, campesterol and stigmasterol. Both UGT80A2 and UGT80B1 are required for the normal production of SGs and ASGs in seeds. The polypeptide is Sterol 3-beta-glucosyltransferase UGT80A2 (UGT80A2) (Arabidopsis thaliana (Mouse-ear cress)).